A 187-amino-acid polypeptide reads, in one-letter code: MTATAPNTAQQLKYIKDSIKTIPDYPKAGILFRDVTSLLEDPLAYAASIELLTERYLDKGVTKVVGTEARGFLFGAPVALSLGVGFVPVRKPGKLPRATISESYELEYGTDKLEIHTDSIKPGDKVLVIDDLLATGGTIEATVKLIRKLGGEVTDAAFVINLPDLGGEARLNDQGITCYSLVDFSGH.

Belongs to the purine/pyrimidine phosphoribosyltransferase family. In terms of assembly, homodimer.

The protein resides in the cytoplasm. It catalyses the reaction AMP + diphosphate = 5-phospho-alpha-D-ribose 1-diphosphate + adenine. It functions in the pathway purine metabolism; AMP biosynthesis via salvage pathway; AMP from adenine: step 1/1. Its function is as follows. Catalyzes a salvage reaction resulting in the formation of AMP, that is energically less costly than de novo synthesis. The polypeptide is Adenine phosphoribosyltransferase (Yersinia enterocolitica serotype O:8 / biotype 1B (strain NCTC 13174 / 8081)).